Here is a 260-residue protein sequence, read N- to C-terminus: Tetraspanin-14 (260 aa).

The Cytoplasmic segment spans residues 1 to 10; sequence MKSQSHKPWN. Residues 11-31 traverse the membrane as a helical segment; sequence LVAGIFFPIITFFLSAPLVGH. Residues 32–54 are Extracellular-facing; that stretch reads ALYLFCMRNDHVYYRDFQSTLPR. The chain crosses the membrane as a helical span at residues 55-75; sequence VQTLVSVSLLALFLLSNIGMF. Over 76–80 the chain is Cytoplasmic; that stretch reads LRPRR. A helical membrane pass occupies residues 81 to 101; it reads LSYFLVIVFFIGFAYSGVYKM. Residues 102–260 are Extracellular-facing; sequence ESRRFSPTPM…FLSSLTSLFR (159 aa). N-linked (GlcNAc...) asparagine glycosylation occurs at Asn-182.

The protein belongs to the tetraspanin (TM4SF) family.

It is found in the membrane. May be involved in the regulation of cell differentiation. The sequence is that of Tetraspanin-14 (TET14) from Arabidopsis thaliana (Mouse-ear cress).